The sequence spans 117 residues: Histone H1-like protein HC1 (117 aa).

Positions 57 to 117 are disordered; the sequence is EKSGLMTRKP…KSSKSRYLRK (61 aa). Over residues 66-81 the composition is skewed to basic residues; sequence PATKAKKAAATKKAAP. Low complexity predominate over residues 82–94; sequence KPKIQAKAAPKAK. Residues 95–117 show a composition bias toward basic residues; the sequence is ATTKKTPAKAKAKKSSKSRYLRK.

It belongs to the histone H1/H5 family. HCT subfamily.

Functionally, might have a role analogous to that of eukaryotic histone proteins. This Chlamydia psittaci (Chlamydophila psittaci) protein is Histone H1-like protein HC1 (hctA).